The sequence spans 473 residues: MTTVMKFGGTSVGSGERIRHVAKIVTKRKKEDDDVVVVVSAMSEVTNALVEISQQALDVRDIAKVGDFIKFIREKHYKAIEEAIKSEEIKEEVKKIIDSRIEELEKVLIGVAYLGELTPKSRDYILSFGERLSSPILSGAIRDLGEKSIALEGGEAGIITDNNFGSARVKRLEVKERLLPLLKEGIIPVVTGFIGTTEEGYITTLGRGGSDYSAALIGYGLDADIIEIWTDVSGVYTTDPRLVPTARRIPKLSYIEAMELAYFGAKVLHPRTIEPAMEKGIPILVKNTFEPESEGTLITNDMEMSDSIVKAISTIKNVALINIFGAGMVGVSGTAARIFKALGEEEVNVILISQGSSETNISLVVSEEDVDKALKALKREFGDFGKKSFLNNNLIRDVSVDKDVCVISVVGAGMRGAKGIAGKIFTAVSESGANIKMIAQGSSEVNISFVIDEKDLLNCVRKLHEKFIEKTNS.

ACT domains lie at 323–392 and 409–473; these read IFGA…FLNN and VVGA…KTNS.

The protein belongs to the aspartokinase family.

It catalyses the reaction L-aspartate + ATP = 4-phospho-L-aspartate + ADP. It functions in the pathway amino-acid biosynthesis; L-lysine biosynthesis via DAP pathway; (S)-tetrahydrodipicolinate from L-aspartate: step 1/4. It participates in amino-acid biosynthesis; L-methionine biosynthesis via de novo pathway; L-homoserine from L-aspartate: step 1/3. The protein operates within amino-acid biosynthesis; L-threonine biosynthesis; L-threonine from L-aspartate: step 1/5. This is Probable aspartokinase from Methanocaldococcus jannaschii (strain ATCC 43067 / DSM 2661 / JAL-1 / JCM 10045 / NBRC 100440) (Methanococcus jannaschii).